Reading from the N-terminus, the 322-residue chain is Ribosomal RNA small subunit methyltransferase H (322 aa).

Residues 40 to 42 (GGH), D60, F84, D106, and Q113 each bind S-adenosyl-L-methionine.

The protein belongs to the methyltransferase superfamily. RsmH family.

It localises to the cytoplasm. It catalyses the reaction cytidine(1402) in 16S rRNA + S-adenosyl-L-methionine = N(4)-methylcytidine(1402) in 16S rRNA + S-adenosyl-L-homocysteine + H(+). Functionally, specifically methylates the N4 position of cytidine in position 1402 (C1402) of 16S rRNA. In Aggregatibacter aphrophilus (strain NJ8700) (Haemophilus aphrophilus), this protein is Ribosomal RNA small subunit methyltransferase H.